We begin with the raw amino-acid sequence, 93 residues long: Small ribosomal subunit protein bS18 (93 aa).

This sequence belongs to the bacterial ribosomal protein bS18 family. In terms of assembly, part of the 30S ribosomal subunit. Forms a tight heterodimer with protein bS6.

Its function is as follows. Binds as a heterodimer with protein bS6 to the central domain of the 16S rRNA, where it helps stabilize the platform of the 30S subunit. In Variovorax paradoxus (strain S110), this protein is Small ribosomal subunit protein bS18.